The following is a 427-amino-acid chain: C4-dicarboxylate transport protein (427 aa).

9 helical membrane-spanning segments follow: residues 5–25 (IFSSLYFQVLLAITLGVFLGH), 44–64 (LIKMIIAPVIFCTVVTGIAGM), 76–96 (IALLYFEVVSTIALVIGLCVV), 142–162 (IGAFASGNILQVLLFAVLFGF), 184–206 (VIFGIINMIMRLAPVGAFGAMAF), 222–242 (LIACFYVTCLLFIFMVLGSIA), 307–327 (IYLTMAAIFIAQATNTPLDLF), 330–350 (ITLLVVLLISSKGAAGVTGSG), and 352–372 (IVLAATISAVGHLPLAGLALI).

This sequence belongs to the dicarboxylate/amino acid:cation symporter (DAACS) (TC 2.A.23) family.

Its subcellular location is the cell inner membrane. In terms of biological role, responsible for the transport of dicarboxylates such as succinate, fumarate, and malate from the periplasm across the membrane. The sequence is that of C4-dicarboxylate transport protein from Aeromonas salmonicida (strain A449).